A 2389-amino-acid chain; its full sequence is Highly reducing polyketide synthase Dhc3 (2389 aa).

The region spanning 9–433 is the Ketosynthase family 3 (KS3) domain; that stretch reads DVPIAVVGLA…GTNGHAVLES (425 aa). Active-site for beta-ketoacyl synthase activity residues include Cys181, His316, and His356. Residues 551-861 are malonyl-CoA:ACP transacylase (MAT) domain; the sequence is FVFTGQGAQW…LSGPVEQILN (311 aa). Residue Ser641 is the For malonyltransferase activity of the active site. The interval 944–1079 is N-terminal hotdog fold; that stretch reads RSLIGAQVPM…GLITIDYADT (136 aa). The region spanning 944-1263 is the PKS/mFAS DH domain; that stretch reads RSLIGAQVPM…VSELENDTEA (320 aa). The interval 946-1262 is dehydratase (DH) domain; the sequence is LIGAQVPMMD…RVSELENDTE (317 aa). Catalysis depends on His976, which acts as the Proton acceptor; for dehydratase activity. The segment at 1107–1263 is C-terminal hotdog fold; the sequence is PDICSKEDFY…VSELENDTEA (157 aa). Asp1173 serves as the catalytic Proton donor; for dehydratase activity. The tract at residues 1673 to 1987 is enoylreductase (ER) domain; that stretch reads GLLDTLAFIE…QGKHRGKLVL (315 aa). Positions 2011 to 2191 are catalytic ketoreductase (KRc) domain; it reads ATYLFVGGLG…VAVDLGIMRD (181 aa). The 78-residue stretch at 2302–2379 folds into the Carrier domain; it reads EAVSIITDAL…EFAEKIAEKS (78 aa). Position 2339 is an O-(pantetheine 4'-phosphoryl)serine (Ser2339).

It functions in the pathway mycotoxin biosynthesis. Highly reducing polyketide synthase; part of the gene cluster that mediates the biosynthesis of 10,11-dehydrocurvularin, a prevalent fungal phytotoxin with heat shock response and immune-modulatory activities. The highly reducing polyketide synthase Dhc3 is responsible for biosynthesis up to the tetraketide stage. The non-reducing polyketide synthase Dhc5 then conducts four additional chain extension cycles, producing the unreduced part of the nascent octaketide from C-1 to C-8 in 10,11-dehydrocurvularin. The sequence is that of Highly reducing polyketide synthase Dhc3 (Dhc3) from Alternaria cinerariae.